Consider the following 61-residue polypeptide: Probradykinin-1 (61 aa).

The N-terminal stretch at 1-22 is a signal peptide; the sequence is MSFLKKSLFLVLFLGLVSFSIC. Residues 23–48 constitute a propeptide that is removed on maturation; sequence EEEKRETEEEENKDETEEQSEEKKRF. A disordered region spans residues 24-61; it reads EEKRETEEEENKDETEEQSEEKKRFEPVPPGFTPFRLT. Acidic residues predominate over residues 30–42; it reads EEEENKDETEEQS.

It belongs to the frog skin active peptide (FSAP) family. Bradykinin-related peptide subfamily. Expressed by the skin glands.

It localises to the secreted. In terms of biological role, may produce in vitro relaxation of rat arterial smooth muscle and constriction of intestinal smooth muscle. May target bradykinin receptors (BDKRB). This Pithecopus azureus (Orange-legged monkey tree frog) protein is Probradykinin-1.